A 326-amino-acid polypeptide reads, in one-letter code: Delta-aminolevulinic acid dehydratase (326 aa).

3 residues coordinate Zn(2+): C119, C121, and C129. K198 serves as the catalytic Schiff-base intermediate with substrate. Residues R208 and R220 each contribute to the 5-aminolevulinate site. Mg(2+) is bound at residue E236. K251 acts as the Schiff-base intermediate with substrate in catalysis. Residues S277 and Y316 each coordinate 5-aminolevulinate.

Belongs to the ALAD family. In terms of assembly, homooctamer. Requires Zn(2+) as cofactor.

It carries out the reaction 2 5-aminolevulinate = porphobilinogen + 2 H2O + H(+). Its pathway is porphyrin-containing compound metabolism; protoporphyrin-IX biosynthesis; coproporphyrinogen-III from 5-aminolevulinate: step 1/4. Functionally, catalyzes an early step in the biosynthesis of tetrapyrroles. Binds two molecules of 5-aminolevulinate per subunit, each at a distinct site, and catalyzes their condensation to form porphobilinogen. This is Delta-aminolevulinic acid dehydratase (hemB) from Synechococcus elongatus (strain ATCC 33912 / PCC 7942 / FACHB-805) (Anacystis nidulans R2).